Here is a 61-residue protein sequence, read N- to C-terminus: Photosystem II reaction center protein Z (61 aa).

The next 2 membrane-spanning stretches (helical) occupy residues 5–25 (LTAL…VALA) and 38–58 (TKGF…DGVA).

The protein belongs to the PsbZ family. As to quaternary structure, PSII is composed of 1 copy each of membrane proteins PsbA, PsbB, PsbC, PsbD, PsbE, PsbF, PsbH, PsbI, PsbJ, PsbK, PsbL, PsbM, PsbT, PsbX, PsbY, PsbZ, Psb30/Ycf12, at least 3 peripheral proteins of the oxygen-evolving complex and a large number of cofactors. It forms dimeric complexes.

It is found in the plastid. It localises to the chloroplast thylakoid membrane. Functionally, may control the interaction of photosystem II (PSII) cores with the light-harvesting antenna, regulates electron flow through the 2 photosystem reaction centers. PSII is a light-driven water plastoquinone oxidoreductase, using light energy to abstract electrons from H(2)O, generating a proton gradient subsequently used for ATP formation. This chain is Photosystem II reaction center protein Z, found in Phaeodactylum tricornutum (strain CCAP 1055/1).